The chain runs to 504 residues: UDP-N-acetylmuramoylalanine--D-glutamate ligase (504 aa).

132-138 (GTNGKTT) serves as a coordination point for ATP. Positions 286–295 (DRDASDEPAP) are enriched in basic and acidic residues. Residues 286 to 305 (DRDASDEPAPKRRRKNEVAT) form a disordered region.

Belongs to the MurCDEF family.

The protein resides in the cytoplasm. The catalysed reaction is UDP-N-acetyl-alpha-D-muramoyl-L-alanine + D-glutamate + ATP = UDP-N-acetyl-alpha-D-muramoyl-L-alanyl-D-glutamate + ADP + phosphate + H(+). It participates in cell wall biogenesis; peptidoglycan biosynthesis. In terms of biological role, cell wall formation. Catalyzes the addition of glutamate to the nucleotide precursor UDP-N-acetylmuramoyl-L-alanine (UMA). The sequence is that of UDP-N-acetylmuramoylalanine--D-glutamate ligase from Paraburkholderia xenovorans (strain LB400).